Consider the following 306-residue polypeptide: Dihydroorotate dehydrogenase B (NAD(+)), catalytic subunit (306 aa).

FMN is bound by residues serine 24 and 48-49 (KA). Substrate contacts are provided by residues lysine 48 and 72–76 (NAIGL). 2 residues coordinate FMN: asparagine 102 and asparagine 130. Asparagine 130 contributes to the substrate binding site. Residue cysteine 133 is the Nucleophile of the active site. The FMN site is built by lysine 168 and isoleucine 194. 195–196 (NT) contacts substrate. Residues glycine 220, 246-247 (GG), and 268-269 (GT) each bind FMN.

It belongs to the dihydroorotate dehydrogenase family. Type 1 subfamily. As to quaternary structure, heterotetramer of 2 PyrK and 2 PyrD type B subunits. It depends on FMN as a cofactor.

The protein resides in the cytoplasm. It carries out the reaction (S)-dihydroorotate + NAD(+) = orotate + NADH + H(+). The protein operates within pyrimidine metabolism; UMP biosynthesis via de novo pathway; orotate from (S)-dihydroorotate (NAD(+) route): step 1/1. Functionally, catalyzes the conversion of dihydroorotate to orotate with NAD(+) as electron acceptor. The sequence is that of Dihydroorotate dehydrogenase B (NAD(+)), catalytic subunit (pyrD) from Malacoplasma penetrans (strain HF-2) (Mycoplasma penetrans).